The chain runs to 382 residues: S-adenosylmethionine synthase (382 aa).

ATP is bound at residue His16. Asp18 serves as a coordination point for Mg(2+). Glu44 is a K(+) binding site. L-methionine contacts are provided by Glu57 and Gln100. Residues 100 to 110 (QSPDIAQGVDN) form a flexible loop region. ATP is bound by residues 165 to 167 (DAK), 231 to 232 (RF), Asp240, 246 to 247 (RK), and Lys267. Position 240 (Asp240) interacts with L-methionine. Lys271 lines the L-methionine pocket.

This sequence belongs to the AdoMet synthase family. As to quaternary structure, homotetramer; dimer of dimers. Mg(2+) serves as cofactor. The cofactor is K(+).

The protein localises to the cytoplasm. The catalysed reaction is L-methionine + ATP + H2O = S-adenosyl-L-methionine + phosphate + diphosphate. Its pathway is amino-acid biosynthesis; S-adenosyl-L-methionine biosynthesis; S-adenosyl-L-methionine from L-methionine: step 1/1. In terms of biological role, catalyzes the formation of S-adenosylmethionine (AdoMet) from methionine and ATP. The overall synthetic reaction is composed of two sequential steps, AdoMet formation and the subsequent tripolyphosphate hydrolysis which occurs prior to release of AdoMet from the enzyme. The protein is S-adenosylmethionine synthase of Legionella pneumophila subsp. pneumophila (strain Philadelphia 1 / ATCC 33152 / DSM 7513).